Here is a 31-residue protein sequence, read N- to C-terminus: Cycloviolacin-O23 (31 aa).

The segment at residues 1 to 31 (GLPTCGETCFGGTCNTPGCTCDSSWPICTHN) is a cross-link (cyclopeptide (Gly-Asn)). Cystine bridges form between cysteine 5-cysteine 19, cysteine 9-cysteine 21, and cysteine 14-cysteine 28.

Post-translationally, this is a cyclic peptide. As to expression, expressed in leaves but not in petals, petioles, roots and runners (at protein level).

Functionally, probably participates in a plant defense mechanism. The sequence is that of Cycloviolacin-O23 from Viola odorata (Sweet violet).